We begin with the raw amino-acid sequence, 253 residues long: Tryptophan synthase alpha chain (253 aa).

Residues Glu48 and Asp59 each act as proton acceptor in the active site.

Belongs to the TrpA family. Tetramer of two alpha and two beta chains.

The enzyme catalyses (1S,2R)-1-C-(indol-3-yl)glycerol 3-phosphate + L-serine = D-glyceraldehyde 3-phosphate + L-tryptophan + H2O. It functions in the pathway amino-acid biosynthesis; L-tryptophan biosynthesis; L-tryptophan from chorismate: step 5/5. Its function is as follows. The alpha subunit is responsible for the aldol cleavage of indoleglycerol phosphate to indole and glyceraldehyde 3-phosphate. The chain is Tryptophan synthase alpha chain from Caldicellulosiruptor saccharolyticus (strain ATCC 43494 / DSM 8903 / Tp8T 6331).